Consider the following 59-residue polypeptide: Large ribosomal subunit protein uL30 (59 aa).

This sequence belongs to the universal ribosomal protein uL30 family. As to quaternary structure, part of the 50S ribosomal subunit.

This is Large ribosomal subunit protein uL30 from Aliivibrio salmonicida (strain LFI1238) (Vibrio salmonicida (strain LFI1238)).